The primary structure comprises 264 residues: Transmembrane protein 41A (264 aa).

An N-terminal signal peptide occupies residues 1-17; the sequence is MHSLLGLLLVFAGSTFA. 5 consecutive transmembrane segments (helical) span residues 67 to 87, 90 to 110, 153 to 173, 175 to 195, and 219 to 239; these read VYVF…AIPG, FLNV…LCCV, LFFF…FLNL, APIL…GLIP, and WETA…GTLI. Residues 96–207 are VTT domain; sequence GALFGPWLGL…FICVQTGSIL (112 aa).

The protein belongs to the TMEM41 family.

It localises to the membrane. The polypeptide is Transmembrane protein 41A (TMEM41A) (Bos taurus (Bovine)).